The sequence spans 262 residues: Small ribosomal subunit protein eS1y (262 aa).

Residues 1–18 (MAVGKNKRISKGRKGGKK) show a composition bias toward basic residues. Residues 1–21 (MAVGKNKRISKGRKGGKKKAV) are disordered.

The protein belongs to the eukaryotic ribosomal protein eS1 family. As to quaternary structure, component of the small ribosomal subunit. Mature ribosomes consist of a small (40S) and a large (60S) subunit. The 40S subunit contains about 33 different proteins and 1 molecule of RNA (18S). The 60S subunit contains about 49 different proteins and 3 molecules of RNA (25S, 5.8S and 5S).

Its subcellular location is the cytoplasm. The chain is Small ribosomal subunit protein eS1y from Arabidopsis thaliana (Mouse-ear cress).